The following is a 174-amino-acid chain: Thioredoxin O, mitochondrial (174 aa).

Residues 1-59 (MALAHRLCRLPRLLPLAAAAAASKPYLPGKPSPAPPPPLSSPPPFPSLSRLFSTTPSSS) constitute a mitochondrion transit peptide. One can recognise a Thioredoxin domain in the interval 60–172 (GDSSMVVVGS…LESTMESLHK (113 aa)). Active-site nucleophile residues include C96 and C99. C96 and C99 form a disulfide bridge.

It belongs to the thioredoxin family. Plant O-type subfamily.

The protein localises to the mitochondrion. Functionally, probable thiol-disulfide oxidoreductase that may participate in various redox reactions. The protein is Thioredoxin O, mitochondrial of Oryza sativa subsp. japonica (Rice).